A 55-amino-acid chain; its full sequence is Large ribosomal subunit protein eL37 (55 aa).

Zn(2+) is bound by residues Cys-20, Cys-23, Cys-35, and Cys-38. The C4-type zinc-finger motif lies at 20 to 38 (CRRCGKNSYHKRHHRCSSC).

Belongs to the eukaryotic ribosomal protein eL37 family. It depends on Zn(2+) as a cofactor.

Its function is as follows. Binds to the 23S rRNA. The polypeptide is Large ribosomal subunit protein eL37 (Cenarchaeum symbiosum (strain A)).